A 177-amino-acid chain; its full sequence is Large ribosomal subunit protein uL6 (177 aa).

The protein belongs to the universal ribosomal protein uL6 family. As to quaternary structure, part of the 50S ribosomal subunit.

Functionally, this protein binds to the 23S rRNA, and is important in its secondary structure. It is located near the subunit interface in the base of the L7/L12 stalk, and near the tRNA binding site of the peptidyltransferase center. The chain is Large ribosomal subunit protein uL6 from Marinomonas sp. (strain MWYL1).